A 148-amino-acid chain; its full sequence is Aspartate carbamoyltransferase regulatory chain (148 aa).

Residues cysteine 106, cysteine 111, cysteine 134, and cysteine 137 each contribute to the Zn(2+) site.

Belongs to the PyrI family. Contains catalytic and regulatory chains. Zn(2+) is required as a cofactor.

In terms of biological role, involved in allosteric regulation of aspartate carbamoyltransferase. The chain is Aspartate carbamoyltransferase regulatory chain from Methanococcus vannielii (strain ATCC 35089 / DSM 1224 / JCM 13029 / OCM 148 / SB).